The primary structure comprises 245 residues: 7-cyano-7-deazaguanine synthase 2 (245 aa).

F12–L22 is an ATP binding site. C200, C215, C218, and C221 together coordinate Zn(2+).

The protein belongs to the QueC family. Zn(2+) is required as a cofactor.

The catalysed reaction is 7-carboxy-7-deazaguanine + NH4(+) + ATP = 7-cyano-7-deazaguanine + ADP + phosphate + H2O + H(+). The protein operates within purine metabolism; 7-cyano-7-deazaguanine biosynthesis. Its function is as follows. Catalyzes the ATP-dependent conversion of 7-carboxy-7-deazaguanine (CDG) to 7-cyano-7-deazaguanine (preQ(0)). The chain is 7-cyano-7-deazaguanine synthase 2 from Mesorhizobium japonicum (strain LMG 29417 / CECT 9101 / MAFF 303099) (Mesorhizobium loti (strain MAFF 303099)).